The following is a 212-amino-acid chain: Adenylate kinase (212 aa).

Residue 10–15 (GAGKGT) coordinates ATP. Positions 30 to 59 (STGDMFRAAMANQTEMGVLAKSYIDKGELV) are NMP. AMP-binding positions include Thr31, Arg36, 57 to 59 (ELV), 86 to 89 (GYPR), and Gln93. The segment at 127-159 (GRIIHRVTGETFHKVFNPPVDYKEEDYYQREDD) is LID. Residues Arg128 and 137 to 138 (TF) contribute to the ATP site. Positions 156 and 167 each coordinate AMP. Residue Gln195 coordinates ATP.

The protein belongs to the adenylate kinase family. Monomer.

The protein localises to the cytoplasm. The enzyme catalyses AMP + ATP = 2 ADP. The protein operates within purine metabolism; AMP biosynthesis via salvage pathway; AMP from ADP: step 1/1. Catalyzes the reversible transfer of the terminal phosphate group between ATP and AMP. Plays an important role in cellular energy homeostasis and in adenine nucleotide metabolism. This is Adenylate kinase from Streptococcus pneumoniae serotype 4 (strain ATCC BAA-334 / TIGR4).